The sequence spans 328 residues: Gonadotropin-releasing hormone receptor (328 aa).

At 1 to 38 the chain is on the extracellular side; it reads MQDDTSSEQNPTHCSAINSSVPLVQGALPTLTLSGKIR. N-linked (GlcNAc...) asparagine glycosylation occurs at Asn18. The chain crosses the membrane as a helical span at residues 39–59; it reads VTVTFFLFLVSTTLNASFLLK. Residues 60 to 84 lie on the Cytoplasmic side of the membrane; that stretch reads LQKWTQKKEKGKKLSRMKVLLKHLT. The chain crosses the membrane as a helical span at residues 85–105; sequence LANLLETLIVMPLDGMWNITV. The Extracellular segment spans residues 106–115; sequence QWYAGELLCK. A disulfide bridge links Cys114 with Cys196. A helical membrane pass occupies residues 116–136; the sequence is ILSYLKLFSMYAPAFMMVVIS. Residues 137 to 160 are Cytoplasmic-facing; that stretch reads LDRSMAITRPLPVQSNRKLEQSMT. The chain crosses the membrane as a helical span at residues 161–181; sequence GLAWGLSSVLAGPQLYIFKMI. The Extracellular segment spans residues 182-208; it reads HLENGPGQTEVFSQCVTHCSFPQWWHQ. The helical transmembrane segment at 209–229 threads the bilayer; sequence AFYNFFTFICLFIIPLLIMLI. Topologically, residues 230–271 are cytoplasmic; that stretch reads CNAKIIFTLTQVLQQDSNKLQLNQSKNNIPRARLRTLKMTVA. A helical membrane pass occupies residues 272 to 292; that stretch reads FAASFIVCWTPYYVLGLWYWF. At 293 to 306 the chain is on the extracellular side; that stretch reads DPGMLHRMSEPVNH. The helical transmembrane segment at 307-327 threads the bilayer; sequence FFFLFAFLNPCFDPLIYGYFS. Position 328 (Leu328) is a topological domain, cytoplasmic.

Belongs to the G-protein coupled receptor 1 family.

It is found in the cell membrane. In terms of biological role, receptor for gonadotropin releasing hormone (GnRH) that mediates the action of GnRH to stimulate the secretion of the gonadotropic hormones luteinizing hormone (LH) and follicle-stimulating hormone (FSH). This receptor mediates its action by association with G-proteins that activate a phosphatidylinositol-calcium second messenger system. In Cavia porcellus (Guinea pig), this protein is Gonadotropin-releasing hormone receptor (GNRHR).